The primary structure comprises 383 residues: Bifunctional enzyme IspD/IspF (383 aa).

Positions 1-226 are 2-C-methyl-D-erythritol 4-phosphate cytidylyltransferase; sequence MKIAAVIVAA…ERQIMSETIT (226 aa). Positions 227-383 are 2-C-methyl-D-erythritol 2,4-cyclodiphosphate synthase; the sequence is VTGQGYDVHR…QAIVTARLTT (157 aa). 2 residues coordinate a divalent metal cation: D233 and H235. 4-CDP-2-C-methyl-D-erythritol 2-phosphate is bound by residues 233–235 and 259–260; these read DVH and HS. A divalent metal cation is bound at residue H267. Residues 281 to 283, 357 to 360, F364, and R367 contribute to the 4-CDP-2-C-methyl-D-erythritol 2-phosphate site; these read DIG and TTTE.

In the N-terminal section; belongs to the IspD/TarI cytidylyltransferase family. IspD subfamily. This sequence in the C-terminal section; belongs to the IspF family. Requires a divalent metal cation as cofactor.

The enzyme catalyses 2-C-methyl-D-erythritol 4-phosphate + CTP + H(+) = 4-CDP-2-C-methyl-D-erythritol + diphosphate. It carries out the reaction 4-CDP-2-C-methyl-D-erythritol 2-phosphate = 2-C-methyl-D-erythritol 2,4-cyclic diphosphate + CMP. It functions in the pathway isoprenoid biosynthesis; isopentenyl diphosphate biosynthesis via DXP pathway; isopentenyl diphosphate from 1-deoxy-D-xylulose 5-phosphate: step 2/6. It participates in isoprenoid biosynthesis; isopentenyl diphosphate biosynthesis via DXP pathway; isopentenyl diphosphate from 1-deoxy-D-xylulose 5-phosphate: step 4/6. Its function is as follows. Bifunctional enzyme that catalyzes the formation of 4-diphosphocytidyl-2-C-methyl-D-erythritol from CTP and 2-C-methyl-D-erythritol 4-phosphate (MEP) (IspD), and catalyzes the conversion of 4-diphosphocytidyl-2-C-methyl-D-erythritol 2-phosphate (CDP-ME2P) to 2-C-methyl-D-erythritol 2,4-cyclodiphosphate (ME-CPP) with a corresponding release of cytidine 5-monophosphate (CMP) (IspF). The polypeptide is Bifunctional enzyme IspD/IspF (Maricaulis maris (strain MCS10) (Caulobacter maris)).